Reading from the N-terminus, the 444-residue chain is Methylenetetrahydrofolate--tRNA-(uracil-5-)-methyltransferase TrmFO (444 aa).

FAD is bound at residue 9 to 14 (GAGMAG).

Belongs to the MnmG family. TrmFO subfamily. The cofactor is FAD.

The protein localises to the cytoplasm. It catalyses the reaction uridine(54) in tRNA + (6R)-5,10-methylene-5,6,7,8-tetrahydrofolate + NADH + H(+) = 5-methyluridine(54) in tRNA + (6S)-5,6,7,8-tetrahydrofolate + NAD(+). The enzyme catalyses uridine(54) in tRNA + (6R)-5,10-methylene-5,6,7,8-tetrahydrofolate + NADPH + H(+) = 5-methyluridine(54) in tRNA + (6S)-5,6,7,8-tetrahydrofolate + NADP(+). Catalyzes the folate-dependent formation of 5-methyl-uridine at position 54 (M-5-U54) in all tRNAs. In Cereibacter sphaeroides (strain ATCC 17029 / ATH 2.4.9) (Rhodobacter sphaeroides), this protein is Methylenetetrahydrofolate--tRNA-(uracil-5-)-methyltransferase TrmFO.